The chain runs to 496 residues: Lysine--tRNA ligase (496 aa).

The Mg(2+) site is built by E407 and E414.

It belongs to the class-II aminoacyl-tRNA synthetase family. In terms of assembly, homodimer. Mg(2+) is required as a cofactor.

The protein localises to the cytoplasm. It carries out the reaction tRNA(Lys) + L-lysine + ATP = L-lysyl-tRNA(Lys) + AMP + diphosphate. The chain is Lysine--tRNA ligase from Staphylococcus haemolyticus (strain JCSC1435).